Here is a 422-residue protein sequence, read N- to C-terminus: Isocitrate dehydrogenase [NADP] (422 aa).

Thr94 is a binding site for NADP(+). D-threo-isocitrate-binding residues include Ser103, Asn105, Arg109, Arg119, and Arg143. Asp310 serves as a coordination point for Mg(2+). NADP(+) is bound by residues His344–Tyr350, Asn357, Tyr396, and Arg400.

Belongs to the isocitrate and isopropylmalate dehydrogenases family. Homodimer. Requires Mg(2+) as cofactor. It depends on Mn(2+) as a cofactor.

It catalyses the reaction D-threo-isocitrate + NADP(+) = 2-oxoglutarate + CO2 + NADPH. In terms of biological role, catalyzes the oxidative decarboxylation of isocitrate to 2-oxoglutarate and carbon dioxide with the concomitant reduction of NADP(+). The polypeptide is Isocitrate dehydrogenase [NADP] (icd) (Staphylococcus epidermidis (strain ATCC 35984 / DSM 28319 / BCRC 17069 / CCUG 31568 / BM 3577 / RP62A)).